Consider the following 248-residue polypeptide: Probable transcriptional regulatory protein Desal_2886 (248 aa).

Residues 1 to 21 (MAGHSKWANIQHRKGRQDAKR) form a disordered region.

Belongs to the TACO1 family.

It is found in the cytoplasm. This Maridesulfovibrio salexigens (strain ATCC 14822 / DSM 2638 / NCIMB 8403 / VKM B-1763) (Desulfovibrio salexigens) protein is Probable transcriptional regulatory protein Desal_2886.